The chain runs to 853 residues: MSLSEGQVHRFLDQNPGFADQYFGRKLSPEDVANACEDGCPEGCTSFRELCQVEESAALFELVQDMQENVNMERVVFKILRRLCSILHADRCSLFMYRQRNGVAELATRLFSVQPDSVLEDCLVPPDSEIVFPLDIGVVGHVAQTKKMVNVQDVMECPHFSSFADELTDYVTRNILATPIMNGKDVVAVIMAVNKLDGPCFTSEDEDVFLKYLNFGTLNLKIYHLSYLHNCETRRGQVLLWSANKVFEELTDIERQFHKAFYTVRAYLNCDRYSVGLLDMTKEKEFFDVWPVLMGEAQAYSGPRTPDGREILFYKVIDYILHGKEDIKVIPSPPADHWALASGLPTYVAESGFICNIMNAPADEMFNFQEGPLDDSGWIVKNVLSMPIVNKKEEIVGVATFYNRKDGKPFDEQDEVLMESLTQFLGWSVLNTDTYDKMNKLENRKDIAQDMVLYHVRCDREEIQLILPTRERLGKEPADCEEDELGKILKEVLPGPAKFDIYEFHFSDLECTELELVKCGIQMYYELGVVRKFQIPQEVLVRFLFSVSKGYRRITYHNWRHGFNVAQTMFTLLMTGKLKSYYTDLEAFAMVTAGLCHDIDHRGTNNLYQMKSQNPLAKLHGSSILERHHLEFGKFLLSEETLNIYQNLNRRQHEHVIHLMDIAIIATDLALYFKKRTMFQKIVDESKNYEDRKSWVEYLSLETTRKEIVMAMMMTACDLSAITKPWEVQSKVALLVAAEFWEQGDLERTVLDQQPIPMMDRNKAAELPKLQVGFIDFVCTFVYKEFSRFHEEILPMFDRLQNNRKEWKALADEYEAKVKALEEDQKKETTAKKVGTEICNGGPAPRSSTCRIL.

At serine 2 the chain carries N-acetylserine. 2 consecutive GAF domains span residues 71-220 and 252-429; these read NMER…TLNL and DIER…GWSV. A PDEase domain is found at 481–814; sequence EEDELGKILK…KEWKALADEY (334 aa). Histidine 557 (proton donor) is an active-site residue. Residues histidine 561, histidine 597, aspartate 598, and aspartate 718 each coordinate a divalent metal cation. Cysteine 850 bears the Cysteine methyl ester mark. The S-geranylgeranyl cysteine moiety is linked to residue cysteine 850. Residues 851-853 constitute a propeptide, removed in mature form; sequence RIL.

The protein belongs to the cyclic nucleotide phosphodiesterase family. Oligomer composed of two catalytic chains (alpha and beta), an inhibitory chain (gamma) and the delta chain. A divalent metal cation serves as cofactor.

It localises to the membrane. The protein resides in the cell projection. The protein localises to the cilium. Its subcellular location is the photoreceptor outer segment. The catalysed reaction is 3',5'-cyclic GMP + H2O = GMP + H(+). Functionally, necessary for the formation of a functional phosphodiesterase holoenzyme. Involved in retinal circadian rhythm photoentrainment via modulation of UVA and orange light-induced phase-shift of the retina clock. May participate in processes of transmission and amplification of the visual signal. In terms of biological role, rod-specific cGMP phosphodiesterase that catalyzes the hydrolysis of 3',5'-cyclic GMP. Necessary for the formation of a functional phosphodiesterase holoenzyme. Involved in retinal circadian rhythm photoentrainment via modulation of UVA and orange light-induced phase-shift of the retina clock. May participate in processes of transmission and amplification of the visual signal. The sequence is that of Rod cGMP-specific 3',5'-cyclic phosphodiesterase subunit beta (PDE6B) from Bos taurus (Bovine).